We begin with the raw amino-acid sequence, 322 residues long: Formimidoylglutamase (322 aa).

Mn(2+) contacts are provided by His-127, Asp-163, His-165, Asp-167, Asp-254, and Asp-256.

It belongs to the arginase family. It depends on Mn(2+) as a cofactor.

It catalyses the reaction N-formimidoyl-L-glutamate + H2O = formamide + L-glutamate. It participates in amino-acid degradation; L-histidine degradation into L-glutamate; L-glutamate from N-formimidoyl-L-glutamate (hydrolase route): step 1/1. Catalyzes the conversion of N-formimidoyl-L-glutamate to L-glutamate and formamide. This chain is Formimidoylglutamase, found in Paraburkholderia xenovorans (strain LB400).